Consider the following 279-residue polypeptide: HTH-type transcriptional regulator HdfR (279 aa).

Positions 1–58 constitute an HTH lysR-type domain; the sequence is MDTELLKTFLEVSRTRHFGRAAESLYLTQSAVSFRIRQLENQLGVNLFTRHRNNIRLT. The H-T-H motif DNA-binding region spans 18–37; that stretch reads FGRAAESLYLTQSAVSFRIR.

Belongs to the LysR transcriptional regulatory family.

Negatively regulates the transcription of the flagellar master operon flhDC by binding to the upstream region of the operon. This Shigella boydii serotype 18 (strain CDC 3083-94 / BS512) protein is HTH-type transcriptional regulator HdfR.